The following is a 505-amino-acid chain: Putative F-box protein At1g58310 (505 aa).

Positions 7–55 constitute an F-box domain; that stretch reads RDIISGLPDSLLCHILSFLNTKEAASTSVLAKKWRYLFASVPNLDFDDS.

This is Putative F-box protein At1g58310 from Arabidopsis thaliana (Mouse-ear cress).